The chain runs to 529 residues: Corneodesmosin (529 aa).

The first 32 residues, 1-32 (MGSSRAPWMGRVGGHGMMALLLAGLLLPGTLA), serve as a signal peptide directing secretion. Disordered regions lie at residues 38–248 (FSDP…SVSG) and 383–492 (GSTG…SSAG). Composition is skewed to low complexity over residues 58–83 (GKGD…SARS), 90–100 (GSSSGSSIAQG), 111–175 (GYSQ…NGSA), 189–231 (PSQP…SGGP), 392–408 (SPSS…SSSS), and 426–441 (PGTG…QSSG). N172 carries an N-linked (GlcNAc...) asparagine glycan. Over residues 449–467 (GSKSSSSGHPCMSVSSLTL) the composition is skewed to polar residues.

It is found in the secreted. Important for the epidermal barrier integrity. The sequence is that of Corneodesmosin (CDSN) from Pan troglodytes (Chimpanzee).